The chain runs to 497 residues: Serine hydroxymethyltransferase (497 aa).

Residues Leu176 and 180–182 each bind (6S)-5,6,7,8-tetrahydrofolate; that span reads GHL. An N6-(pyridoxal phosphate)lysine modification is found at Lys289.

Belongs to the SHMT family. Homodimer. Requires pyridoxal 5'-phosphate as cofactor.

It localises to the cytoplasm. The catalysed reaction is (6R)-5,10-methylene-5,6,7,8-tetrahydrofolate + glycine + H2O = (6S)-5,6,7,8-tetrahydrofolate + L-serine. The protein operates within one-carbon metabolism; tetrahydrofolate interconversion. Its pathway is amino-acid biosynthesis; glycine biosynthesis; glycine from L-serine: step 1/1. Its function is as follows. Catalyzes the reversible interconversion of serine and glycine with tetrahydrofolate (THF) serving as the one-carbon carrier. This reaction serves as the major source of one-carbon groups required for the biosynthesis of purines, thymidylate, methionine, and other important biomolecules. Also exhibits THF-independent aldolase activity toward beta-hydroxyamino acids, producing glycine and aldehydes, via a retro-aldol mechanism. The sequence is that of Serine hydroxymethyltransferase from Chlamydia abortus (strain DSM 27085 / S26/3) (Chlamydophila abortus).